We begin with the raw amino-acid sequence, 113 residues long: Nucleoid-associated protein ROP_41370 (113 aa).

Belongs to the YbaB/EbfC family. Homodimer.

Its subcellular location is the cytoplasm. It localises to the nucleoid. Binds to DNA and alters its conformation. May be involved in regulation of gene expression, nucleoid organization and DNA protection. The protein is Nucleoid-associated protein ROP_41370 of Rhodococcus opacus (strain B4).